The following is a 394-amino-acid chain: 4-O-methyl-glucuronoyl methylesterase (394 aa).

A signal peptide spans 1–18 (MVHLTPALLLASAAFAAA). 3 cysteine pairs are disulfide-bonded: C29–C63, C210–C345, and C242–C317. Positions 209 to 214 (GCSRNG) match the GXSYXG catalytic site motif motif. S211 functions as the Nucleophile in the catalytic mechanism. Positions 215, 257, 265, and 308 each coordinate substrate. The Proton donor/acceptor role is filled by H344.

Belongs to the carbohydrate esterase 15 (CE15) family.

The protein localises to the secreted. The enzyme catalyses a 4-O-methyl-alpha-D-glucuronosyl ester derivative + H2O = 4-O-methyl-alpha-D-glucuronate derivative + an alcohol + H(+). Its function is as follows. Glucuronoyl esterase which may play a significant role in biomass degradation, as it is considered to disconnect hemicellulose from lignin through the hydrolysis of the ester bond between 4-O-methyl-D-glucuronic acid residues of glucuronoxylans and aromatic alcohols of lignin. This chain is 4-O-methyl-glucuronoyl methylesterase, found in Neurospora crassa (strain ATCC 24698 / 74-OR23-1A / CBS 708.71 / DSM 1257 / FGSC 987).